The sequence spans 70 residues: Large ribosomal subunit protein bL31 (70 aa).

4 residues coordinate Zn(2+): Cys16, Cys18, Cys37, and Cys40.

The protein belongs to the bacterial ribosomal protein bL31 family. Type A subfamily. As to quaternary structure, part of the 50S ribosomal subunit. Requires Zn(2+) as cofactor.

Functionally, binds the 23S rRNA. In Erwinia tasmaniensis (strain DSM 17950 / CFBP 7177 / CIP 109463 / NCPPB 4357 / Et1/99), this protein is Large ribosomal subunit protein bL31.